We begin with the raw amino-acid sequence, 411 residues long: Arginase (411 aa).

The disordered stretch occupies residues 83–106 (NNYINNNDNNNDNNNDNNNDNNNN). Positions 193, 216, 218, and 220 each coordinate Mn(2+). Asn-222, Ser-229, and Asp-274 together coordinate L-arginine. Mn(2+) contacts are provided by Asp-323 and Asp-325.

It belongs to the arginase family. As to quaternary structure, homotrimer; oligomerization is dependent on Mn(2+) binding. Mn(2+) is required as a cofactor.

The enzyme catalyses L-arginine + H2O = urea + L-ornithine. It participates in nitrogen metabolism; urea cycle; L-ornithine and urea from L-arginine: step 1/1. With respect to regulation, feedback inhibition by product L-ornithine,. Inhibited by 2(S)-amino-6-boronohexanoic acid (ABH); however, with less efficiency than human ARG1. In terms of biological role, catalyzes the hydrolysis of L-arginine into urea and L-ornithine, which is a precursor for polyamine biosynthesis. May play a role in parasite intra-hepatic development during the host liver stage. The sequence is that of Arginase from Plasmodium falciparum (isolate 3D7).